The chain runs to 126 residues: Holo-[acyl-carrier-protein] synthase (126 aa).

The Mg(2+) site is built by aspartate 9 and glutamate 58.

The protein belongs to the P-Pant transferase superfamily. AcpS family. Mg(2+) is required as a cofactor.

The protein localises to the cytoplasm. It catalyses the reaction apo-[ACP] + CoA = holo-[ACP] + adenosine 3',5'-bisphosphate + H(+). Functionally, transfers the 4'-phosphopantetheine moiety from coenzyme A to a Ser of acyl-carrier-protein. The protein is Holo-[acyl-carrier-protein] synthase of Salmonella choleraesuis (strain SC-B67).